The chain runs to 32 residues: MSDIN-like toxin proprotein 2 (32 aa).

Residues 1–10 constitute a propeptide that is removed on maturation; the sequence is MSDINATRVP. Positions 11 to 17 form a cross-link, cyclopeptide (Ala-Pro); sequence AWLAECP. The propeptide occupies 18 to 32; the sequence is CVGDDISHLLTRGEK.

It belongs to the MSDIN fungal toxin family. In terms of processing, processed by the macrocyclase-peptidase enzyme POPB to yield a toxic cyclic heptapeptide. POPB first removes 10 residues from the N-terminus. Conformational trapping of the remaining peptide forces the enzyme to release this intermediate rather than proceed to macrocyclization. The enzyme rebinds the remaining peptide in a different conformation and catalyzes macrocyclization of the N-terminal 7 residues.

Its function is as follows. Probable toxin that belongs to the MSDIN-like toxin family responsible for a large number of food poisoning cases and deaths. This chain is MSDIN-like toxin proprotein 2, found in Amanita rimosa.